Consider the following 539-residue polypeptide: Propionyl-CoA carboxylase beta chain, mitochondrial (539 aa).

Residues 1–28 constitute a mitochondrion transit peptide; it reads MAAAVRVTAARARLRVVVRSLHAGVRSL. Residues 32 to 290 form the CoA carboxyltransferase N-terminal domain; that stretch reads PVSVNERIEN…SNQDPAPIRE (259 aa). The tract at residues 32 to 533 is carboxyltransferase; it reads PVSVNERIEN…SKKVQRPWRK (502 aa). Residue Ser-71 is modified to Phosphoserine. Lys-99 carries the post-translational modification N6-acetyllysine; alternate. At Lys-99 the chain carries N6-succinyllysine; alternate. In terms of domain architecture, CoA carboxyltransferase C-terminal spans 294–533; that stretch reads PSDRLVPELD…SKKVQRPWRK (240 aa). An acyl-CoA binding region spans residues 325–358; that stretch reads DERDFFEIMPNYAKNIIVGFARMNGRTVGIVGNQ. An N6-acetyllysine; alternate mark is found at Lys-474 and Lys-489. Lys-474 and Lys-489 each carry N6-succinyllysine; alternate.

The protein belongs to the AccD/PCCB family. As to quaternary structure, the holoenzyme is a dodecamer composed of 6 PCCA/alpha subunits and 6 PCCB/beta subunits.

It localises to the mitochondrion matrix. The enzyme catalyses propanoyl-CoA + hydrogencarbonate + ATP = (S)-methylmalonyl-CoA + ADP + phosphate + H(+). It catalyses the reaction butanoyl-CoA + hydrogencarbonate + ATP = (2S)-ethylmalonyl-CoA + ADP + phosphate + H(+). The protein operates within metabolic intermediate metabolism; propanoyl-CoA degradation; succinyl-CoA from propanoyl-CoA: step 1/3. In terms of biological role, this is one of the 2 subunits of the biotin-dependent propionyl-CoA carboxylase (PCC), a mitochondrial enzyme involved in the catabolism of odd chain fatty acids, branched-chain amino acids isoleucine, threonine, methionine, and valine and other metabolites. Propionyl-CoA carboxylase catalyzes the carboxylation of propionyl-CoA/propanoyl-CoA to D-methylmalonyl-CoA/(S)-methylmalonyl-CoA. Within the holoenzyme, the alpha subunit catalyzes the ATP-dependent carboxylation of the biotin carried by the biotin carboxyl carrier (BCC) domain, while the beta subunit then transfers the carboxyl group from carboxylated biotin to propionyl-CoA. Propionyl-CoA carboxylase also significantly acts on butyryl-CoA/butanoyl-CoA, which is converted to ethylmalonyl-CoA/(2S)-ethylmalonyl-CoA at a much lower rate. Other alternative minor substrates include (2E)-butenoyl-CoA/crotonoyl-CoA. The sequence is that of Propionyl-CoA carboxylase beta chain, mitochondrial from Sus scrofa (Pig).